We begin with the raw amino-acid sequence, 299 residues long: Plant-type L-asparaginase (299 aa).

Residue T169 is the Nucleophile of the active site. Substrate contacts are provided by residues 197 to 200 (RVGD) and 220 to 223 (TGVG).

Belongs to the Ntn-hydrolase family. As to quaternary structure, heterotetramer of two alpha and two beta chains arranged as a dimer of alpha/beta heterodimers. The uncleaved protein forms homodimers. Autocleaved. Generates the alpha and beta subunits. The N-terminal residue of the beta subunit is thought to be responsible for the nucleophile hydrolase activity.

It carries out the reaction L-asparagine + H2O = L-aspartate + NH4(+). Divalent metal ions and EDTA do not have significant effect on enzyme activity, indicating that activity is metal-independent. In terms of biological role, catalyzes the hydrolysis of L-asparagine into L-aspartate and ammonia. Also displays D-asparaginase activity, which is about 20% of the L-asparaginase activity. Does not exhibit glutaminase activity. The sequence is that of Plant-type L-asparaginase from Pyrobaculum calidifontis (strain DSM 21063 / JCM 11548 / VA1).